A 948-amino-acid chain; its full sequence is Probable disease resistance protein At5g47260 (948 aa).

The stretch at 20–57 (RKYLYNLERNLEALHKVMQDLNAMRNDLLKRLSKEEEI) forms a coiled coil. In terms of domain architecture, NB-ARC spans 134-432 (HRALPPLVIK…CEGILAKEDR (299 aa)). 176–183 (GRGGVGKT) lines the ATP pocket. LRR repeat units lie at residues 498–519 (MIRR…PQCS), 520–542 (ELTT…FFQW), 545–567 (GLVV…VSSL), 569–591 (LLRF…KELK), 592–614 (SLIH…ASLL), 615–636 (NLQV…EDIQ), 640–661 (SLKE…LSIQ), 666–686 (SIRR…LSLN), and 690–711 (SLCE…WRCT).

This sequence belongs to the disease resistance NB-LRR family.

Its function is as follows. Potential disease resistance protein. The chain is Probable disease resistance protein At5g47260 from Arabidopsis thaliana (Mouse-ear cress).